A 238-amino-acid chain; its full sequence is MHRVSLQAAYVLHSRPYRESSYIVDLITEADGKASAVLKGGGRRKGVPGTLQPFTELEVELGGRGELKSLIRYETTNIRYPLAGAALYAGLYLNELLVKLLQPLEGCRKVFDAYKSSLTFLSLPQPNLEPGIRELEFALLNELGFGVDFCVESATGDIVKNNIAYYFSLTEGVSRTPEPCSVVIEGHHLIAIAGRDWSVPGSLSAAKRLTRRCLDELLGGRPLHSRELMRSYLKLTKG.

It belongs to the RecO family.

In terms of biological role, involved in DNA repair and RecF pathway recombination. The sequence is that of DNA repair protein RecO from Hahella chejuensis (strain KCTC 2396).